The following is a 26-amino-acid chain: Maculatin-3.1 (26 aa).

A26 bears the Alanine amide mark.

In terms of tissue distribution, expressed by the skin dorsal glands.

It localises to the secreted. In terms of biological role, shows antibacterial activity against S.uberis. The protein is Maculatin-3.1 of Ranoidea genimaculata (Brown-spotted tree frog).